The primary structure comprises 78 residues: Probable [Fe-S]-dependent transcriptional repressor (78 aa).

Residues Cys-56, Cys-61, Cys-64, and Cys-70 each contribute to the iron-sulfur cluster site.

Belongs to the FeoC family.

May function as a transcriptional regulator that controls feoABC expression. In Salmonella heidelberg (strain SL476), this protein is Probable [Fe-S]-dependent transcriptional repressor.